Reading from the N-terminus, the 179-residue chain is Large ribosomal subunit protein uL15 (179 aa).

It belongs to the universal ribosomal protein uL15 family. Part of the 50S ribosomal subunit.

Functionally, binds to the 23S rRNA. This Archaeoglobus fulgidus (strain ATCC 49558 / DSM 4304 / JCM 9628 / NBRC 100126 / VC-16) protein is Large ribosomal subunit protein uL15.